Here is a 240-residue protein sequence, read N- to C-terminus: Hairy and enhancer of split-related protein HELT (240 aa).

One can recognise a bHLH domain in the interval arginine 10–leucine 65. At lysine 48 the chain carries N6-acetyllysine. Residues phenylalanine 86–leucine 121 form the Orange domain.

It belongs to the HEY family. Self-associates. Interacts with HES5 and HEY2. Expressed in heart and testis.

The protein localises to the nucleus. Transcriptional repressor which binds preferentially to the canonical E box sequence 5'-CACGCG-3'. Required for the development of GABAergic neurons. This Mus musculus (Mouse) protein is Hairy and enhancer of split-related protein HELT (Helt).